A 432-amino-acid polypeptide reads, in one-letter code: Tyrosine--tRNA ligase (432 aa).

Residue tyrosine 35 participates in L-tyrosine binding. The short motif at 40-49 (PTAGSLHVGH) is the 'HIGH' region element. L-tyrosine contacts are provided by tyrosine 175 and glutamine 179. Positions 239-243 (KFGKT) match the 'KMSKS' region motif. Lysine 242 contributes to the ATP binding site. One can recognise an S4 RNA-binding domain in the interval 365 to 422 (PPLVDLFASTGLVPSKSAARRTIQEGGAYLNNAKVTDIEARVSEADLLHGRYLVLRRG).

The protein belongs to the class-I aminoacyl-tRNA synthetase family. TyrS type 1 subfamily. In terms of assembly, homodimer.

The protein localises to the cytoplasm. It carries out the reaction tRNA(Tyr) + L-tyrosine + ATP = L-tyrosyl-tRNA(Tyr) + AMP + diphosphate + H(+). Its function is as follows. Catalyzes the attachment of tyrosine to tRNA(Tyr) in a two-step reaction: tyrosine is first activated by ATP to form Tyr-AMP and then transferred to the acceptor end of tRNA(Tyr). In Thermobifida fusca (strain YX), this protein is Tyrosine--tRNA ligase.